A 344-amino-acid polypeptide reads, in one-letter code: Phenylalanine--tRNA ligase alpha subunit (344 aa).

Glutamate 255 contributes to the Mg(2+) binding site.

Belongs to the class-II aminoacyl-tRNA synthetase family. Phe-tRNA synthetase alpha subunit type 1 subfamily. In terms of assembly, tetramer of two alpha and two beta subunits. Mg(2+) serves as cofactor.

It localises to the cytoplasm. It catalyses the reaction tRNA(Phe) + L-phenylalanine + ATP = L-phenylalanyl-tRNA(Phe) + AMP + diphosphate + H(+). This chain is Phenylalanine--tRNA ligase alpha subunit, found in Phocaeicola vulgatus (strain ATCC 8482 / DSM 1447 / JCM 5826 / CCUG 4940 / NBRC 14291 / NCTC 11154) (Bacteroides vulgatus).